Reading from the N-terminus, the 173-residue chain is Lithostathine-2 (173 aa).

An N-terminal signal peptide occupies residues 1 to 22 (MAQNNVYLILFLCLMFLSYSQG). The C-type lectin domain maps to 41–171 (INCPEGANAY…EAQYSFVCKF (131 aa)). Cystine bridges form between Cys43/Cys54, Cys71/Cys169, and Cys144/Cys161.

Expressed only in regenerating islets and normal exocrine pancreas, but not in normal pancreatic islets. Expressed strongly in pancreas, weakly in liver, but not at all in gall bladder.

It is found in the secreted. In terms of biological role, might act as an inhibitor of spontaneous calcium carbonate precipitation. In Mus musculus (Mouse), this protein is Lithostathine-2 (Reg2).